Reading from the N-terminus, the 114-residue chain is Small ribosomal subunit protein bS6 (114 aa).

Belongs to the bacterial ribosomal protein bS6 family.

Functionally, binds together with bS18 to 16S ribosomal RNA. This chain is Small ribosomal subunit protein bS6, found in Phocaeicola vulgatus (strain ATCC 8482 / DSM 1447 / JCM 5826 / CCUG 4940 / NBRC 14291 / NCTC 11154) (Bacteroides vulgatus).